A 937-amino-acid polypeptide reads, in one-letter code: Leucine--tRNA ligase (937 aa).

A 'HIGH' region motif is present at residues 34–44 (PYPSGAMHIGH). Positions 609–613 (KMSSS) match the 'KMSKS' region motif.

This sequence belongs to the class-I aminoacyl-tRNA synthetase family.

Its subcellular location is the cytoplasm. The catalysed reaction is tRNA(Leu) + L-leucine + ATP = L-leucyl-tRNA(Leu) + AMP + diphosphate. This is Leucine--tRNA ligase from Methanothermobacter thermautotrophicus (strain ATCC 29096 / DSM 1053 / JCM 10044 / NBRC 100330 / Delta H) (Methanobacterium thermoautotrophicum).